A 410-amino-acid polypeptide reads, in one-letter code: Protein CNPPD1 (410 aa).

A helical membrane pass occupies residues 233–253 (CLLAVAYVSSVALAVASVAVI).

It belongs to the CNPPD1 family.

The protein resides in the membrane. This is Protein CNPPD1 (CNPPD1) from Pongo abelii (Sumatran orangutan).